Here is a 629-residue protein sequence, read N- to C-terminus: DNA topoisomerase 4 subunit B (629 aa).

ATP-binding positions include Tyr4, Asn41, Asp68, 109–115 (GLHGVGI), and Lys333. The 114-residue stretch at 411 to 524 (AELFLVEGDS…AGHVYVAMPP (114 aa)) folds into the Toprim domain. Mg(2+) contacts are provided by Glu417, Asp489, and Asp491.

Belongs to the type II topoisomerase family. ParE type 1 subfamily. In terms of assembly, heterotetramer composed of ParC and ParE. Mg(2+) is required as a cofactor. The cofactor is Mn(2+). Requires Ca(2+) as cofactor.

The enzyme catalyses ATP-dependent breakage, passage and rejoining of double-stranded DNA.. In terms of biological role, topoisomerase IV is essential for chromosome segregation. It relaxes supercoiled DNA. Performs the decatenation events required during the replication of a circular DNA molecule. The chain is DNA topoisomerase 4 subunit B from Pseudomonas aeruginosa (strain ATCC 15692 / DSM 22644 / CIP 104116 / JCM 14847 / LMG 12228 / 1C / PRS 101 / PAO1).